The chain runs to 326 residues: MSETGIIPKSTDYTDWPADVCKYSQVFEDVLVVGTYMLDESTKLRHGKLVLYDTKEDVLKRVFDMHCDAILDFKWSPHDASVLAVAHSTGHVSFYRHQFRAELMFLRGIKVADSSVLMLSLDFSDSGKELAVSMSNGSVLIIDIDSGVIKNKWKEHDYEAWTCHYSRQDNNLLYSGGDDAALVCYDQRIPNSCIWRDIQVHHSGVVSILSRAPFGPYIATGEYGDFMHTLDTRNIGKPLFSANLGGGVWRLEHMETTENYHKVLGILMHRGAQVLRISNDFSSIDASKRIFKEHESMCYGGDWRHTDGLLATCSFYDKRVCLWEDI.

4 WD repeats span residues 65-105 (MHCD…ELMF), 113-152 (DSSVLMLSLDFSDSGKELAVSMSNGSVLIIDIDSGVIKNK), 155-195 (EHDY…SCIW), and 293-326 (EHESMCYGGDWRHTDGLLATCSFYDKRVCLWEDI).

The protein belongs to the DPH7 family.

Its subcellular location is the cytoplasm. It is found in the nucleus. It catalyses the reaction diphthine methyl ester-[translation elongation factor 2] + H2O = diphthine-[translation elongation factor 2] + methanol + H(+). The protein operates within protein modification; peptidyl-diphthamide biosynthesis. Its function is as follows. Catalyzes the demethylation of diphthine methyl ester to form diphthine, an intermediate in diphthamide biosynthesis, a post-translational modification of histidine which occurs in translation elongation factor 2 (eft201 and eft202). In Schizosaccharomyces pombe (strain 972 / ATCC 24843) (Fission yeast), this protein is Diphthine methyltransferase (rrt2).